We begin with the raw amino-acid sequence, 246 residues long: MFPVKVKVEKSELEMAKARNQLDAVLQCLLEKSHMDRERLDEEPGKTSLDTHNKDCSITATGKRPSARFPHQRRKKRREMDEGLAEGGPQRSNTYVIKLFDRSVDLAQFSENTPLYPICRAWMRNSPTVRERERSPSSPLPPLPEDEEGSEVTNSKSRDVYKLPPPTAPGPPGDACRSRIPSPLQPETQGTPDDEPSEPEPSPSTLIYRNMQRWKRIRQRWKEASHRNQLRYSESMKILREMYERQ.

The residue at position 1 (Met1) is an N-acetylmethionine. Glycyl lysine isopeptide (Lys-Gly) (interchain with G-Cter in SUMO2) cross-links involve residues Lys5 and Lys7. The segment covering 36 to 55 has biased composition (basic and acidic residues); that stretch reads DRERLDEEPGKTSLDTHNKD. 2 disordered regions span residues 36 to 90 and 127 to 209; these read DRER…GGPQ and PTVR…LIYR. Ser135 and Ser138 each carry phosphoserine. Residues 163-172 are compositionally biased toward pro residues; that stretch reads LPPPTAPGPP. Thr167 bears the Phosphothreonine mark. Residues Ser182 and Ser202 each carry the phosphoserine modification.

As to quaternary structure, component of the DREAM complex (also named LINC complex) at least composed of E2F4, E2F5, LIN9, LIN37, LIN52, LIN54, MYBL1, MYBL2, RBL1, RBL2, RBBP4, TFDP1 and TFDP2. The complex exists in quiescent cells where it represses cell cycle-dependent genes. It dissociates in S phase when LIN9, LIN37, LIN52 and LIN54 form a subcomplex that binds to MYBL2.

The protein is Protein lin-37 homolog (LIN37) of Bos taurus (Bovine).